A 163-amino-acid chain; its full sequence is Glycine cleavage system H protein, mitochondrial (163 aa).

The N-terminal 34 residues, 1–34 (MALRMWASSAANALGVSCAPKSHLLPALSLSRCF), are a transit peptide targeting the mitochondrion. Residues 56 to 137 (VATIGITDHA…YEEGWMVKVK (82 aa)) enclose the Lipoyl-binding domain. Lysine 96 bears the N6-lipoyllysine mark.

Belongs to the GcvH family. In terms of assembly, the glycine cleavage system is composed of four proteins: P, T, L and H. (R)-lipoate serves as cofactor.

It localises to the mitochondrion. In terms of biological role, the glycine cleavage system catalyzes the degradation of glycine. The H protein shuttles the methylamine group of glycine from the P protein to the T protein. The protein is Glycine cleavage system H protein, mitochondrial (GDCSH) of Mesembryanthemum crystallinum (Common ice plant).